A 552-amino-acid polypeptide reads, in one-letter code: Chaperonin GroEL (552 aa).

ATP-binding positions include threonine 30–proline 33, lysine 51, aspartate 87–threonine 91, glycine 415, asparagine 479–alanine 481, and aspartate 495.

The protein belongs to the chaperonin (HSP60) family. In terms of assembly, forms a cylinder of 14 subunits composed of two heptameric rings stacked back-to-back. Interacts with the co-chaperonin GroES.

Its subcellular location is the cytoplasm. It carries out the reaction ATP + H2O + a folded polypeptide = ADP + phosphate + an unfolded polypeptide.. Functionally, together with its co-chaperonin GroES, plays an essential role in assisting protein folding. The GroEL-GroES system forms a nano-cage that allows encapsulation of the non-native substrate proteins and provides a physical environment optimized to promote and accelerate protein folding. This Stutzerimonas stutzeri (Pseudomonas stutzeri) protein is Chaperonin GroEL.